Here is a 490-residue protein sequence, read N- to C-terminus: MDNKNFQSKTGFNLENTYLTLPNIFFSEQNPKGSKNPKLIKFNTSLAEELGLNEEVLNSDFGLNIFAGNETFPGIVPIAQAYAGHQFGHFTMLGDGRALLLGEHVTKDCKRYDVQLKGSGRTIYSRGGDGKAALAPMLREYIISEGMHGLGIPTTRSLAVVSTGEEVLRERFEQGAILTRIASSHIRVGTFAYAAQWGTLEDLKSLADYTIKRHFPNIADNENKYILFLEEVINRQAELIVKWQSVGFIHGVMNTDNMVISGETIDYGPCAFMDTYDTNTVFSSIDYAGRYAYGNQPNMALWNLARFSEALLPLLNPNLDEAVNIAKKSISNFSKLYKKYWFNKMRTKLGLFTEKENDELLIEGLLSTMQKYEADFTNTFVSLTLNKFEDEKVFSSDEFKTWYALWQNRLKEENRPQEEVRNLMMNNNPYIIPRNHLVEEALKNAEKGDFTFMDNLLEALKNPYSYSKDLEKYTKLPEKSDTPYVTYCGT.

The ATP site is built by Gly94, Gly96, Arg97, Lys117, Asp129, Gly130, Arg180, and Arg187. The active-site Proton acceptor is Asp256. The Mg(2+) site is built by Asn257 and Asp266. Asp266 contributes to the ATP binding site.

Belongs to the SELO family. It depends on Mg(2+) as a cofactor. Requires Mn(2+) as cofactor.

It catalyses the reaction L-seryl-[protein] + ATP = 3-O-(5'-adenylyl)-L-seryl-[protein] + diphosphate. The catalysed reaction is L-threonyl-[protein] + ATP = 3-O-(5'-adenylyl)-L-threonyl-[protein] + diphosphate. It carries out the reaction L-tyrosyl-[protein] + ATP = O-(5'-adenylyl)-L-tyrosyl-[protein] + diphosphate. The enzyme catalyses L-histidyl-[protein] + UTP = N(tele)-(5'-uridylyl)-L-histidyl-[protein] + diphosphate. It catalyses the reaction L-seryl-[protein] + UTP = O-(5'-uridylyl)-L-seryl-[protein] + diphosphate. The catalysed reaction is L-tyrosyl-[protein] + UTP = O-(5'-uridylyl)-L-tyrosyl-[protein] + diphosphate. In terms of biological role, nucleotidyltransferase involved in the post-translational modification of proteins. It can catalyze the addition of adenosine monophosphate (AMP) or uridine monophosphate (UMP) to a protein, resulting in modifications known as AMPylation and UMPylation. In Clostridium perfringens (strain 13 / Type A), this protein is Protein nucleotidyltransferase YdiU.